A 576-amino-acid chain; its full sequence is Proton pump-interactor 3B (576 aa).

Residues 34–63 (SEVTTDEEEDTIFSGGDSSSGLAAEEDSSG) form a disordered region. Coiled coils occupy residues 132–155 (RMVI…LRCT) and 205–241 (EKEA…SDKL). Over residues 369–381 (RSEKVHKMNREDS) the composition is skewed to basic and acidic residues. Residues 369 to 395 (RSEKVHKMNREDSSSNSSEDGNVITDK) form a disordered region. A coiled-coil region spans residues 411-467 (KKKEEEIDEEALKERKREEQLEKARLVMERKRKLQEKAAAKAAIRAQKEAEKKLKAI). A helical transmembrane segment spans residues 555–575 (WVWGLSSAALAVSLVLVVLLL).

This sequence belongs to the plant Proton pump-interactor protein family.

Its subcellular location is the cell membrane. It is found in the endoplasmic reticulum membrane. Functionally, may regulate plasma membrane ATPase activity. The chain is Proton pump-interactor 3B (PPI3B) from Arabidopsis thaliana (Mouse-ear cress).